We begin with the raw amino-acid sequence, 435 residues long: GTPase Der (435 aa).

EngA-type G domains are found at residues 4-167 and 175-350; these read KIVA…SKND and TKIA…QSLS. GTP contacts are provided by residues 10-17, 57-61, 119-122, 181-188, 228-232, and 293-296; these read GKPNVGKS, DTGGI, NKYD, DTAGI, and NKWD. A KH-like domain is found at 351-435; the sequence is VKVKTYVLNE…PINLIFRERK (85 aa).

The protein belongs to the TRAFAC class TrmE-Era-EngA-EngB-Septin-like GTPase superfamily. EngA (Der) GTPase family. In terms of assembly, associates with the 50S ribosomal subunit.

GTPase that plays an essential role in the late steps of ribosome biogenesis. The protein is GTPase Der of Mycoplasma capricolum subsp. capricolum (strain California kid / ATCC 27343 / NCTC 10154).